A 154-amino-acid polypeptide reads, in one-letter code: Putative pre-16S rRNA nuclease (154 aa).

The protein belongs to the YqgF nuclease family.

It localises to the cytoplasm. Could be a nuclease involved in processing of the 5'-end of pre-16S rRNA. In Gluconacetobacter diazotrophicus (strain ATCC 49037 / DSM 5601 / CCUG 37298 / CIP 103539 / LMG 7603 / PAl5), this protein is Putative pre-16S rRNA nuclease.